The chain runs to 311 residues: Acetyl-coenzyme A carboxylase carboxyl transferase subunit alpha (311 aa).

The 258-residue stretch at 32–289 folds into the CoA carboxyltransferase C-terminal domain; it reads ELNLLEERLR…KSVLEQKLAQ (258 aa).

This sequence belongs to the AccA family. In terms of assembly, acetyl-CoA carboxylase is a heterohexamer composed of biotin carboxyl carrier protein (AccB), biotin carboxylase (AccC) and two subunits each of ACCase subunit alpha (AccA) and ACCase subunit beta (AccD).

It localises to the cytoplasm. It catalyses the reaction N(6)-carboxybiotinyl-L-lysyl-[protein] + acetyl-CoA = N(6)-biotinyl-L-lysyl-[protein] + malonyl-CoA. Its pathway is lipid metabolism; malonyl-CoA biosynthesis; malonyl-CoA from acetyl-CoA: step 1/1. In terms of biological role, component of the acetyl coenzyme A carboxylase (ACC) complex. First, biotin carboxylase catalyzes the carboxylation of biotin on its carrier protein (BCCP) and then the CO(2) group is transferred by the carboxyltransferase to acetyl-CoA to form malonyl-CoA. The sequence is that of Acetyl-coenzyme A carboxylase carboxyl transferase subunit alpha from Exiguobacterium sibiricum (strain DSM 17290 / CCUG 55495 / CIP 109462 / JCM 13490 / 255-15).